We begin with the raw amino-acid sequence, 141 residues long: MADDLVDGLTRAGLPGAKASARYVRVSPTKARRVVDLVRGRSVGEALDILRFAPQAASEDVYKVVASAAANAENNHSLDPATLWVGEVYVDEGPTLKRIRPRAQGRAYRIRKRTSHITVVVESREPVSAAGRGAKTTRRAR.

It belongs to the universal ribosomal protein uL22 family. In terms of assembly, part of the 50S ribosomal subunit.

Its function is as follows. This protein binds specifically to 23S rRNA; its binding is stimulated by other ribosomal proteins, e.g. L4, L17, and L20. It is important during the early stages of 50S assembly. It makes multiple contacts with different domains of the 23S rRNA in the assembled 50S subunit and ribosome. Functionally, the globular domain of the protein is located near the polypeptide exit tunnel on the outside of the subunit, while an extended beta-hairpin is found that lines the wall of the exit tunnel in the center of the 70S ribosome. This Frankia casuarinae (strain DSM 45818 / CECT 9043 / HFP020203 / CcI3) protein is Large ribosomal subunit protein uL22.